A 499-amino-acid polypeptide reads, in one-letter code: MVKALMVQGTASDAGKSIIAAGLCRIFKQDGLEVVPFKSQNMALNSFITKKGDEMGRAQVVQAEAAGKEPDVRMNPVLLKPTSDRKSQVVFLGRVLRDMDAVEYHEYKQQLLPKIKEVYDELGAENDIIVIEGAGSPAEINLNDRDIVNMGMAKLVDAPVILVADIDKGGVFASIYGTIELMPPEDRKRIKGVIINKFRGDVALLQSGIDMIEELTQVPVIGVVPYAQLDIDSEDSVALVQKSRRFDSRKSLDIAVVSLKRLSNFTDFHSLEIQPDVSVRYVQPGDAIGRPDLLILPGSKNTIEDMNYLCESGLEAEILECLEQGVRIFGICGGYQLLGQKISDPLHLESDLEETRGLGILETETVLQPVKRTTQVRALHEGQELEGYEIHMGETQLADRLEPFSIIKEQNGEATERPDGAVAYGGQVQGTYLHGVFDNLEWTRQYLNELRLAKGLEPLEDQLVSIKDFKDREYDKLADVLRQSLDMEQIYQIINREEK.

One can recognise a GATase cobBQ-type domain in the interval 251 to 442; the sequence is SLDIAVVSLK…LHGVFDNLEW (192 aa). Catalysis depends on C332, which acts as the Nucleophile. Residue H434 is part of the active site.

Belongs to the CobB/CobQ family. CobQ subfamily.

Its pathway is cofactor biosynthesis; adenosylcobalamin biosynthesis. Its function is as follows. Catalyzes amidations at positions B, D, E, and G on adenosylcobyrinic A,C-diamide. NH(2) groups are provided by glutamine, and one molecule of ATP is hydrogenolyzed for each amidation. The polypeptide is Cobyric acid synthase (Streptococcus sanguinis (strain SK36)).